The chain runs to 245 residues: Thiopurine S-methyltransferase (245 aa).

29 to 40 (WQDKWVSHKIGF) contacts S-adenosyl-L-methionine. Residue Phe40 participates in substrate binding. Position 58 is an N6-acetyllysine (Lys58). S-adenosyl-L-methionine contacts are provided by residues Leu69, Glu90, 134 to 135 (SI), and Arg152.

The protein belongs to the class I-like SAM-binding methyltransferase superfamily. TPMT family. Monomer.

It is found in the cytoplasm. It carries out the reaction S-adenosyl-L-methionine + a thiopurine = S-adenosyl-L-homocysteine + a thiopurine S-methylether.. The polypeptide is Thiopurine S-methyltransferase (TPMT) (Oryctolagus cuniculus (Rabbit)).